The sequence spans 264 residues: 3-methyl-2-oxobutanoate hydroxymethyltransferase (264 aa).

Residues D45 and D84 each coordinate Mg(2+). 3-methyl-2-oxobutanoate-binding positions include 45 to 46 (DS), D84, and K112. E114 is a Mg(2+) binding site. Catalysis depends on E181, which acts as the Proton acceptor.

The protein belongs to the PanB family. As to quaternary structure, homodecamer; pentamer of dimers. The cofactor is Mg(2+).

The protein resides in the cytoplasm. The catalysed reaction is 3-methyl-2-oxobutanoate + (6R)-5,10-methylene-5,6,7,8-tetrahydrofolate + H2O = 2-dehydropantoate + (6S)-5,6,7,8-tetrahydrofolate. Its pathway is cofactor biosynthesis; (R)-pantothenate biosynthesis; (R)-pantoate from 3-methyl-2-oxobutanoate: step 1/2. Its function is as follows. Catalyzes the reversible reaction in which hydroxymethyl group from 5,10-methylenetetrahydrofolate is transferred onto alpha-ketoisovalerate to form ketopantoate. The chain is 3-methyl-2-oxobutanoate hydroxymethyltransferase from Escherichia coli O127:H6 (strain E2348/69 / EPEC).